Reading from the N-terminus, the 214-residue chain is Thymidylate kinase (214 aa).

11-18 (GPEGAGKT) contacts ATP.

It belongs to the thymidylate kinase family.

The enzyme catalyses dTMP + ATP = dTDP + ADP. Functionally, phosphorylation of dTMP to form dTDP in both de novo and salvage pathways of dTTP synthesis. This Leuconostoc citreum (strain KM20) protein is Thymidylate kinase.